The sequence spans 373 residues: Capsular polysaccharide phosphotransferase (373 aa).

It belongs to the stealth family.

In terms of biological role, part of a capsule gene locus. Expression was not detected under standard growth conditions. The chain is Capsular polysaccharide phosphotransferase from Neisseria meningitidis serogroup B.